The chain runs to 138 residues: uncharacterized protein (138 aa).

A helical transmembrane segment spans residues 19-40; the sequence is ECKVSVISFFLLAFLLMAHIWL. A run of 3 repeats spans residues 94-106, 107-119, and 120-132. Residues 94-132 form a 3 X 13 AA tandem repeats of K-G-E-I-E-G-K-E-E-K-K-E-[GV] region; the sequence is KGEIEGKEEKKEGKGEIEGKEEKKEGKGEIEGKEEKKEV. A disordered region spans residues 98 to 138; it reads EGKEEKKEGKGEIEGKEEKKEGKGEIEGKEEKKEVENGPRK.

As to expression, expressed in roots, leaves and flowers.

Its subcellular location is the mitochondrion membrane. In terms of biological role, involved in cytoplasmic male sterility (CMS) by leading to pollen abortion. Not expressed in fertile (normal) plants. This is an uncharacterized protein from Raphanus sativus (Radish).